The primary structure comprises 399 residues: Putative 3'-5' exonuclease R431 (399 aa).

The 3'-5' exonuclease domain occupies 118–297; sequence FQIVDNWIEN…IYNELQLMTN (180 aa). In terms of domain architecture, R3H spans 335-399; the sequence is ERRLKSIESK…NKYVIITRHC (65 aa).

This is Putative 3'-5' exonuclease R431 from Acanthamoeba polyphaga (Amoeba).